We begin with the raw amino-acid sequence, 324 residues long: Phthalate 4,5-dioxygenase oxygenase reductase subunit (324 aa).

In terms of domain architecture, FAD-binding FR-type spans 9–111 (DGFTGLKVIA…ATPQNEFELI (103 aa)). 115–229 (RQFIFVAGGI…PGSIHFESFG (115 aa)) contacts NAD(+). The 2Fe-2S ferredoxin-type domain occupies 241–324 (FSVTLGRSGI…ARNDVLVLDL (84 aa)). [2Fe-2S] cluster is bound by residues C275, C280, C283, and C311.

This sequence belongs to the PDR/VanB family. In terms of assembly, this dioxygenase system consists of two proteins: phthalate oxygenase and phthalate oxygenase reductase. It depends on FMN as a cofactor.

It catalyses the reaction phthalate + NADH + O2 + H(+) = cis-4,5-dihydroxycyclohexa-2,6-diene-1,2-dicarboxylate + NAD(+). It participates in xenobiotic degradation; phthalate degradation; 3,4-dihydroxybenzoate from phthalate: step 1/3. This chain is Phthalate 4,5-dioxygenase oxygenase reductase subunit (pht2), found in Pseudomonas putida (Arthrobacter siderocapsulatus).